We begin with the raw amino-acid sequence, 257 residues long: UPF0246 protein Daro_2893 (257 aa).

It belongs to the UPF0246 family.

This Dechloromonas aromatica (strain RCB) protein is UPF0246 protein Daro_2893.